Reading from the N-terminus, the 637-residue chain is Sodium-dependent proline transporter (637 aa).

At 1 to 45 (MKKLQEAHLRKPVTPDLLMTPSDQGDVDLDVDFAADRGNWTGKLD) the chain is on the cytoplasmic side. Threonine 20 bears the Phosphothreonine mark. Serine 22 bears the Phosphoserine mark. Helical transmembrane passes span 46-66 (FLLS…FPYR), 74-93 (AFLV…LFFL), and 117-137 (GAGA…NMII). Residues 138 to 214 (AYVLFYLFAS…QGIGRPGEIR (77 aa)) are Extracellular-facing. Residue asparagine 182 is glycosylated (N-linked (GlcNAc...) asparagine). 9 consecutive transmembrane segments (helical) span residues 215–233 (WNLC…LCIL), 242–259 (VVYF…MLLV), 295–312 (IFYS…FASY), 324–345 (FIVT…FSVL), 378–397 (LPLS…TLGL), 425–443 (VFSG…ILTT), 459–479 (SFGL…VYGI), 500–519 (ACWL…YSIV), and 538–556 (LGIL…GMLV). Over 557-637 (AVLREEGSLW…IAEEEEESMM (81 aa)) the chain is Cytoplasmic. A phosphoserine mark is found at serine 573 and serine 582. The residue at position 588 (threonine 588) is a Phosphothreonine. The residue at position 591 (tyrosine 591) is a Phosphotyrosine. Residues serine 598 and serine 600 each carry the phosphoserine modification.

This sequence belongs to the sodium:neurotransmitter symporter (SNF) (TC 2.A.22) family. SLC6A7 subfamily. Expressed in subpopulations of putative glutamatergic pathways of rat brain.

It is found in the synaptic cell membrane. The catalysed reaction is L-proline(out) + chloride(out) + 2 Na(+)(out) = L-proline(in) + chloride(in) + 2 Na(+)(in). It catalyses the reaction L-pipecolate(out) + chloride(out) + 2 Na(+)(out) = L-pipecolate(in) + chloride(in) + 2 Na(+)(in). Brain specific sodium (and chloride)-dependent proline transporter. Terminates the action of proline by its high affinity sodium-dependent reuptake into presynaptic terminals. The chain is Sodium-dependent proline transporter (Slc6a7) from Rattus norvegicus (Rat).